A 449-amino-acid chain; its full sequence is Phosphomethylpyrimidine synthase (449 aa).

Residues Asn-80, Met-109, Tyr-138, His-173, Ser-193–Gly-195, Asp-234–Arg-237, and Glu-273 each bind substrate. His-277 is a Zn(2+) binding site. A substrate-binding site is contributed by Tyr-300. Zn(2+) is bound at residue His-341. Residues Cys-421, Cys-424, and Cys-429 each coordinate [4Fe-4S] cluster.

Belongs to the ThiC family. Homodimer. It depends on [4Fe-4S] cluster as a cofactor.

The catalysed reaction is 5-amino-1-(5-phospho-beta-D-ribosyl)imidazole + S-adenosyl-L-methionine = 4-amino-2-methyl-5-(phosphooxymethyl)pyrimidine + CO + 5'-deoxyadenosine + formate + L-methionine + 3 H(+). It participates in cofactor biosynthesis; thiamine diphosphate biosynthesis. Its function is as follows. Catalyzes the synthesis of the hydroxymethylpyrimidine phosphate (HMP-P) moiety of thiamine from aminoimidazole ribotide (AIR) in a radical S-adenosyl-L-methionine (SAM)-dependent reaction. The protein is Phosphomethylpyrimidine synthase of Campylobacter hominis (strain ATCC BAA-381 / DSM 21671 / CCUG 45161 / LMG 19568 / NCTC 13146 / CH001A).